Reading from the N-terminus, the 113-residue chain is Class I hydrophobin 1 (113 aa).

An N-terminal signal peptide occupies residues 1–17 (MQFKFLSTVALATLAVA). 4 cysteine pairs are disulfide-bonded: cysteine 32–cysteine 92, cysteine 39–cysteine 86, cysteine 40–cysteine 73, and cysteine 93–cysteine 106.

The protein belongs to the fungal hydrophobin family. Self-assembles to form functional amyloid fibrils called rodlets. Self-assembly into fibrillar rodlets occurs spontaneously at hydrophobic:hydrophilic interfaces and the rodlets further associate laterally to form amphipathic monolayers.

Its subcellular location is the secreted. The protein localises to the cell wall. Aerial growth, conidiation, and dispersal of filamentous fungi in the environment rely upon a capability of their secreting small amphipathic proteins called hydrophobins (HPBs) with low sequence identity. Class I can self-assemble into an outermost layer of rodlet bundles on aerial cell surfaces, conferring cellular hydrophobicity that supports fungal growth, development and dispersal; whereas Class II form highly ordered films at water-air interfaces through intermolecular interactions but contribute nothing to the rodlet structure. CoH1 is an asexual monokaryon-specific class I hydrophobin that is involved in aerial growth of mycelia. The chain is Class I hydrophobin 1 from Coprinopsis cinerea (Inky cap fungus).